The sequence spans 416 residues: cAMP-dependent protein kinase regulatory subunit (416 aa).

Positions 2–183 are dimerization and phosphorylation; sequence VSSLPKESQA…RLEKSIRNNF (182 aa). Residues Ser3, Ser4, Ser9, Ser68, Ser70, Ser74, Ser77, Ser79, Ser81, Ser83, and Ser84 each carry the phosphoserine modification. The tract at residues 8–45 is dimerization/docking domain (D/D); it reads ESQAELQLFQNEINAANPSDFLQFSANYFNKRLEQQRA. The disordered stretch occupies residues 65–138; sequence PEESFSRPQS…TSTPPLPMHF (74 aa). A compositionally biased stretch (low complexity) spans 70-84; that stretch reads SRPQSAQSQSRSRSS. Thr129 is subject to Phosphothreonine. Position 130 is a phosphoserine (Ser130). 2 positions are modified to phosphothreonine: Thr131 and Thr144. The Inhibitor sequence (IS) signature appears at 142–146; it reads RRTSV. Ser145 carries the post-translational modification Phosphoserine; by autocatalysis. Ser147 carries the post-translational modification Phosphoserine. A phosphothreonine mark is found at Thr150 and Thr160. 3',5'-cyclic AMP-binding positions include 184–301, Glu249, Arg258, 302–416, Glu368, and Arg377; these read LFNK…KSMP and VLKS…PTRH.

Belongs to the cAMP-dependent kinase regulatory chain family. In terms of assembly, the inactive holoenzyme of cAMP-dependent protein kinase is a tetramer, composed of 2 regulatory subunits (R, encoded by BCY1) and two catalytic subunits (C, encoded by the 3 partially redundant TPK1, TPK2, and TPK3 genes). Activation by cAMP causes dissociation of the holoenzyme, producing 2 active catalytic monomers C and a regulatory dimer R(2). In terms of processing, phosphorylated by YAK1 in response to glucose starvation. Phosphorylated by MCK1 at Thr-129 upon TOR complex 1 (TORC1) inhibition. Thr-129 phosphorylation activates BCY1 to inhibit PKA. TORC1 inhibits phosphorylation of RxxS/T sites but has no effect on Ser-145 phosphorylation. The phosphorylation sites can be clustered in several groups, all localized in the N-terminal part. The first cluster termed cluster I (CI) is located close to the N-terminus and includes Ser-3, Ser-4 and Ser-9. The second includes Ser-68, Ser-70, Ser-74, Ser-77, Ser-79, Ser-81, Ser-83, and Ser-84. This cluster of phosphorylation sites, termed cluster II (CII), is important for BCY1 cytoplasmic localization and function. The third cluster of phosphorylated residues consists of Thr-144, Ser-145, Ser-147, Thr-150, and Thr-160. This cluster falls within or near the so-called autoinhibitory domain where the catalytic subunit of PKA autophosphorylates the highly conserved Ser-145 to inhibit BCY1. A last cluster of phosphorylated residues included Thr-129, Ser-130, and Thr-131 and is termed cluster III (CIII). Sites in CIII (and to a lesser extent in CII) are hyperphosphorylated in response to rapamycin.

Its subcellular location is the cytoplasm. The protein localises to the nucleus. Functionally, regulatory subunit of the cyclic AMP-dependent protein kinase (PKA), an effector of the Ras/cAMP pathway. Inhibits PKA activity in the absence of cAMP. cAMP activates PKA and promotes growth and proliferation in response to good nutrient conditions. Together with ZDS1, provides a negative feedback control on the cell wall integrity-signaling pathway by acting as a negative regulator of MAP kinase SLT2/MPK1. The sequence is that of cAMP-dependent protein kinase regulatory subunit (BCY1) from Saccharomyces cerevisiae (strain ATCC 204508 / S288c) (Baker's yeast).